The chain runs to 123 residues: Small ribosomal subunit protein uS12 (123 aa).

A disordered region spans residues 1–30; that stretch reads MPTIQQLIRKPRQPKVQRSKSQHLQSCPQK. The span at 9–21 shows a compositional bias: basic residues; that stretch reads RKPRQPKVQRSKS. Asp89 carries the post-translational modification 3-methylthioaspartic acid.

It belongs to the universal ribosomal protein uS12 family. As to quaternary structure, part of the 30S ribosomal subunit. Contacts proteins S8 and S17. May interact with IF1 in the 30S initiation complex.

Functionally, with S4 and S5 plays an important role in translational accuracy. Its function is as follows. Interacts with and stabilizes bases of the 16S rRNA that are involved in tRNA selection in the A site and with the mRNA backbone. Located at the interface of the 30S and 50S subunits, it traverses the body of the 30S subunit contacting proteins on the other side and probably holding the rRNA structure together. The combined cluster of proteins S8, S12 and S17 appears to hold together the shoulder and platform of the 30S subunit. The polypeptide is Small ribosomal subunit protein uS12 (Paracoccus denitrificans (strain Pd 1222)).